Reading from the N-terminus, the 79-residue chain is Exodeoxyribonuclease 7 small subunit (79 aa).

The protein belongs to the XseB family. In terms of assembly, heterooligomer composed of large and small subunits.

It localises to the cytoplasm. The catalysed reaction is Exonucleolytic cleavage in either 5'- to 3'- or 3'- to 5'-direction to yield nucleoside 5'-phosphates.. Bidirectionally degrades single-stranded DNA into large acid-insoluble oligonucleotides, which are then degraded further into small acid-soluble oligonucleotides. In Lactococcus lactis subsp. lactis (strain IL1403) (Streptococcus lactis), this protein is Exodeoxyribonuclease 7 small subunit.